A 292-amino-acid polypeptide reads, in one-letter code: Ribosomal protein L11 methyltransferase (292 aa).

The S-adenosyl-L-methionine site is built by threonine 144, glycine 165, aspartate 187, and asparagine 229.

Belongs to the methyltransferase superfamily. PrmA family.

It localises to the cytoplasm. The enzyme catalyses L-lysyl-[protein] + 3 S-adenosyl-L-methionine = N(6),N(6),N(6)-trimethyl-L-lysyl-[protein] + 3 S-adenosyl-L-homocysteine + 3 H(+). Its function is as follows. Methylates ribosomal protein L11. The protein is Ribosomal protein L11 methyltransferase of Pseudomonas syringae pv. tomato (strain ATCC BAA-871 / DC3000).